We begin with the raw amino-acid sequence, 121 residues long: Small ribosomal subunit protein eS24 (121 aa).

This sequence belongs to the eukaryotic ribosomal protein eS24 family.

This chain is Small ribosomal subunit protein eS24, found in Pyrobaculum arsenaticum (strain DSM 13514 / JCM 11321 / PZ6).